Reading from the N-terminus, the 226-residue chain is 7-cyano-7-deazaguanine synthase (226 aa).

12–22 provides a ligand contact to ATP; sequence LSGGLDSATVV. Positions 191, 201, 204, and 207 each coordinate Zn(2+).

Belongs to the QueC family. Zn(2+) is required as a cofactor.

The enzyme catalyses 7-carboxy-7-deazaguanine + NH4(+) + ATP = 7-cyano-7-deazaguanine + ADP + phosphate + H2O + H(+). The protein operates within purine metabolism; 7-cyano-7-deazaguanine biosynthesis. Its function is as follows. Catalyzes the ATP-dependent conversion of 7-carboxy-7-deazaguanine (CDG) to 7-cyano-7-deazaguanine (preQ(0)). This chain is 7-cyano-7-deazaguanine synthase, found in Pseudomonas syringae pv. tomato (strain ATCC BAA-871 / DC3000).